Consider the following 89-residue polypeptide: Small ribosomal subunit protein uS15 (89 aa).

This sequence belongs to the universal ribosomal protein uS15 family. Part of the 30S ribosomal subunit. Forms a bridge to the 50S subunit in the 70S ribosome, contacting the 23S rRNA.

Its function is as follows. One of the primary rRNA binding proteins, it binds directly to 16S rRNA where it helps nucleate assembly of the platform of the 30S subunit by binding and bridging several RNA helices of the 16S rRNA. Forms an intersubunit bridge (bridge B4) with the 23S rRNA of the 50S subunit in the ribosome. The protein is Small ribosomal subunit protein uS15 of Saccharopolyspora erythraea (strain ATCC 11635 / DSM 40517 / JCM 4748 / NBRC 13426 / NCIMB 8594 / NRRL 2338).